A 266-amino-acid polypeptide reads, in one-letter code: Ribosomal RNA small subunit methyltransferase A (266 aa).

S-adenosyl-L-methionine contacts are provided by N11, L13, G37, E57, D85, and N104.

Belongs to the class I-like SAM-binding methyltransferase superfamily. rRNA adenine N(6)-methyltransferase family. RsmA subfamily.

Its subcellular location is the cytoplasm. The catalysed reaction is adenosine(1518)/adenosine(1519) in 16S rRNA + 4 S-adenosyl-L-methionine = N(6)-dimethyladenosine(1518)/N(6)-dimethyladenosine(1519) in 16S rRNA + 4 S-adenosyl-L-homocysteine + 4 H(+). In terms of biological role, specifically dimethylates two adjacent adenosines (A1518 and A1519) in the loop of a conserved hairpin near the 3'-end of 16S rRNA in the 30S particle. May play a critical role in biogenesis of 30S subunits. This is Ribosomal RNA small subunit methyltransferase A from Campylobacter jejuni subsp. jejuni serotype O:2 (strain ATCC 700819 / NCTC 11168).